The chain runs to 259 residues: Src-like-adapter 2 (259 aa).

Residues 1 to 20 (MGSLSSRGKTSSPSPSSSGP) show a composition bias toward low complexity. The disordered stretch occupies residues 1 to 30 (MGSLSSRGKTSSPSPSSSGPDQEPVSMQPE). G2 carries N-myristoyl glycine lipidation. Residues 31-91 (RHKVTAVALG…PSVYVAKVAH (61 aa)) enclose the SH3 domain. The SH2 domain occupies 93–190 (WLYEGLSREK…GICCPLREPC (98 aa)). Residues 190–259 (CVLQKLGPLP…SLAEDPLDDA (70 aa)) form an SLA C-terminal region.

Interacts (via its C-terminal domain) with CBL (phosphorylated). Interacts (via SH2 domain) with ZAP70 (phosphorylated) and CD3Z (phosphorylated). Interacts (via SH2 domain) with CSF1R (phosphorylated). Post-translationally, phosphorylated by CSF1R. As to expression, mainly expressed in immune system. Highly expressed in spleen and thymus and expressed at intermediate levels in lung. Not expressed in liver, heart and brain. Isoform 1 is predominant in lung and spleen, while isoform 2 is predominant in thymus.

It localises to the cytoplasm. Its subcellular location is the cell membrane. The protein resides in the cytoplasmic vesicle. The protein localises to the late endosome. Its function is as follows. Adapter protein, which negatively regulates T-cell receptor (TCR) signaling. Inhibits T-cell antigen-receptor induced activation of nuclear factor of activated T-cells. May act by linking signaling proteins such as ZAP70 with CBL, leading to a CBL dependent degradation of signaling proteins. The protein is Src-like-adapter 2 (Sla2) of Mus musculus (Mouse).